Here is a 153-residue protein sequence, read N- to C-terminus: Large ribosomal subunit protein uL15 (153 aa).

A disordered region spans residues 21–41 (RGIGSGKGKTGGRGIKGQKSR). The segment covering 23-35 (IGSGKGKTGGRGI) has biased composition (gly residues).

This sequence belongs to the universal ribosomal protein uL15 family. In terms of assembly, part of the 50S ribosomal subunit.

In terms of biological role, binds to the 23S rRNA. The polypeptide is Large ribosomal subunit protein uL15 (Rickettsia massiliae (strain Mtu5)).